Here is a 130-residue protein sequence, read N- to C-terminus: Abscisic acid and environmental stress-inducible protein TAS14 (130 aa).

The tract at residues 1 to 130 (MAQYGNQDQM…KIKDKIPGMH (130 aa)) is disordered. Residues 27–58 (QGTGTGGMMGGTGTGGMMGGTGGEYGTQGMGT) show a composition bias toward gly residues. 2 stretches are compositionally biased toward basic and acidic residues: residues 61–73 (HHHE…RRSD) and 92–130 (KEKI…PGMH).

The protein belongs to the plant dehydrin family.

The protein is Abscisic acid and environmental stress-inducible protein TAS14 (TAS14) of Solanum lycopersicum (Tomato).